A 496-amino-acid chain; its full sequence is Lysine--tRNA ligase (496 aa).

Residues Glu409 and Glu416 each contribute to the Mg(2+) site.

This sequence belongs to the class-II aminoacyl-tRNA synthetase family. In terms of assembly, homodimer. Mg(2+) serves as cofactor.

Its subcellular location is the cytoplasm. The enzyme catalyses tRNA(Lys) + L-lysine + ATP = L-lysyl-tRNA(Lys) + AMP + diphosphate. The sequence is that of Lysine--tRNA ligase from Streptococcus pneumoniae serotype 19F (strain G54).